Here is a 231-residue protein sequence, read N- to C-terminus: Large ribosomal subunit protein uL1 (231 aa).

Belongs to the universal ribosomal protein uL1 family. In terms of assembly, part of the 50S ribosomal subunit.

Functionally, binds directly to 23S rRNA. The L1 stalk is quite mobile in the ribosome, and is involved in E site tRNA release. Its function is as follows. Protein L1 is also a translational repressor protein, it controls the translation of the L11 operon by binding to its mRNA. The chain is Large ribosomal subunit protein uL1 from Alkalilimnicola ehrlichii (strain ATCC BAA-1101 / DSM 17681 / MLHE-1).